The following is a 101-amino-acid chain: Small ribosomal subunit protein uS14 (101 aa).

The protein belongs to the universal ribosomal protein uS14 family. As to quaternary structure, part of the 30S ribosomal subunit. Contacts proteins S3 and S10.

In terms of biological role, binds 16S rRNA, required for the assembly of 30S particles and may also be responsible for determining the conformation of the 16S rRNA at the A site. In Xylella fastidiosa (strain M23), this protein is Small ribosomal subunit protein uS14.